The chain runs to 430 residues: Type 3 secretion system ATPase (430 aa).

162–167 (GCGKTF) is an ATP binding site.

It belongs to the ATPase alpha/beta chains family. T3SS ATPase subfamily. The core secretion machinery of the T3SS is composed of approximately 20 different proteins, including cytoplasmic components, a base, an export apparatus and a needle. This subunit is part of the cytosolic complex. Forms homohexamers. Interacts directly with MxiN/SctL (stator protein) and Spa13/SctO (stalk protein). Can form a soluble complex with Spa33/SctQ, MxiN/SctL and MxiK/SctK.

Its subcellular location is the cytoplasm. The enzyme catalyses ATP + H2O + cellular proteinSide 1 = ADP + phosphate + cellular proteinSide 2.. Its activity is regulated as follows. Oligomerization increases ATPase activity. Monomeric forms exhibit low-level ATPase activity by forming short-lived oligomers with active site contributions from at least two protomers. In contrast, oligomers exhibit enhanced ATP hydrolysis rates that likely result from multiple preformed active sites within the oligomeric complex. Oligomerization is important for both enzyme activation and T3SS function. Activity is regulated by MxiN/SctL, which differentially regulates the activity of the monomer and the oligomer: it up-regulates the ATPase activity of the monomer, while it down-regulates the activity of the oligomer. Its function is as follows. ATPase component of the type III secretion system (T3SS), also called injectisome, which is used to inject bacterial effector proteins into eukaryotic host cells. Acts as a molecular motor to provide the energy that is required for the export of proteins. Required for type III secretion apparatus (T3SA) formation, proper protein secretion, host cell invasion and virulence. May play a critical role in T3SS substrate recognition, disassembly of the effector/chaperone complex and unfolding of the effector in an ATP-dependent manner prior to secretion. This is Type 3 secretion system ATPase from Shigella flexneri.